A 234-amino-acid polypeptide reads, in one-letter code: Acetylxylan esterase 2 (234 aa).

Positions 1 to 17 (MHSKFFAASLLGLGAAA) are cleaved as a signal peptide. A propeptide spanning residues 18-27 (IPLEGVMEKR) is cleaved from the precursor. 2 cysteine pairs are disulfide-bonded: cysteine 29–cysteine 106 and cysteine 73–cysteine 79. Serine 117 is an active-site residue. 3 cysteine pairs are disulfide-bonded: cysteine 128–cysteine 188, cysteine 174–cysteine 206, and cysteine 198–cysteine 205. Aspartate 202 is an active-site residue. N-linked (GlcNAc...) asparagine glycosylation occurs at asparagine 207. Histidine 214 is an active-site residue.

This sequence belongs to the cutinase family. Acetylxylan esterase subfamily. Monomer.

The protein localises to the secreted. It carries out the reaction Deacetylation of xylans and xylo-oligosaccharides.. Its pathway is glycan degradation; xylan degradation. In terms of biological role, degrades acetylated xylans by cleaving acetyl side groups from the hetero-xylan backbone. The protein is Acetylxylan esterase 2 (axe-2) of Talaromyces purpureogenus (Soft rot fungus).